The sequence spans 434 residues: 3-phosphoshikimate 1-carboxyvinyltransferase (434 aa).

Lys-22, Ser-23, and Arg-27 together coordinate 3-phosphoshikimate. Lys-22 contacts phosphoenolpyruvate. The phosphoenolpyruvate site is built by Gly-93 and Arg-121. Positions 168, 169, 170, 199, 320, and 347 each coordinate 3-phosphoshikimate. Gln-170 lines the phosphoenolpyruvate pocket. Asp-320 functions as the Proton acceptor in the catalytic mechanism. The phosphoenolpyruvate site is built by Arg-351, Arg-394, and Lys-419.

Belongs to the EPSP synthase family. Monomer.

It localises to the cytoplasm. The catalysed reaction is 3-phosphoshikimate + phosphoenolpyruvate = 5-O-(1-carboxyvinyl)-3-phosphoshikimate + phosphate. It participates in metabolic intermediate biosynthesis; chorismate biosynthesis; chorismate from D-erythrose 4-phosphate and phosphoenolpyruvate: step 6/7. In terms of biological role, catalyzes the transfer of the enolpyruvyl moiety of phosphoenolpyruvate (PEP) to the 5-hydroxyl of shikimate-3-phosphate (S3P) to produce enolpyruvyl shikimate-3-phosphate and inorganic phosphate. This chain is 3-phosphoshikimate 1-carboxyvinyltransferase, found in Paraburkholderia phymatum (strain DSM 17167 / CIP 108236 / LMG 21445 / STM815) (Burkholderia phymatum).